A 238-amino-acid chain; its full sequence is Survival of motor neuron-related-splicing factor 30 (238 aa).

In terms of domain architecture, Tudor spans 72–132; it reads SWKVGDKCMA…KPVEEGRKAK (61 aa). The Nuclear localization signal signature appears at 142 to 160; the sequence is KKEMIAQQREYKKKKALKK. Ser201 carries the post-translational modification Phosphoserine. An N6-acetyllysine modification is found at Lys219.

The protein belongs to the SMN family. Associates with spliceosomes. Associates with U4/U5/U6 tri-snRNP and with U2 snRNP.

The protein resides in the nucleus speckle. Its subcellular location is the nucleus. The protein localises to the cajal body. Its function is as follows. Involved in spliceosome assembly. This chain is Survival of motor neuron-related-splicing factor 30 (Smndc1), found in Rattus norvegicus (Rat).